Reading from the N-terminus, the 664-residue chain is Macoilin (664 aa).

4 helical membrane-spanning segments follow: residues 28 to 48 (TFLY…DFVL), 75 to 95 (AFSV…LLFI), 120 to 140 (VCLP…AIRF), and 154 to 174 (FAAH…KSYV). Over residues 253–265 (REKGKEKDKDAKK) the composition is skewed to basic and acidic residues. The tract at residues 253 to 274 (REKGKEKDKDAKKHNLGINNNN) is disordered. Ser-305 carries the phosphoserine modification. The span at 320 to 348 (KNYKNASGVVNSSPRSHSATNGSIPSSSS) shows a compositional bias: polar residues. The interval 320 to 367 (KNYKNASGVVNSSPRSHSATNGSIPSSSSKNEKKQKCTSKSPSAHKDL) is disordered. The N-linked (GlcNAc...) asparagine glycan is linked to Asn-324. Ser-332 bears the Phosphoserine mark. 2 N-linked (GlcNAc...) asparagine glycosylation sites follow: Asn-340 and Asn-452. The interval 630–664 (TSPLSPVSPHYSSKFVETSPSGLDPNASVYQPLKK) is disordered. Phosphoserine occurs at positions 631 and 634. Asn-655 is a glycosylation site (N-linked (GlcNAc...) asparagine).

The protein belongs to the macoilin family.

It localises to the rough endoplasmic reticulum membrane. The protein resides in the nucleus membrane. In terms of biological role, plays a role in the regulation of neuronal activity. This is Macoilin (MACO1) from Sus scrofa (Pig).